The sequence spans 554 residues: Solute carrier family 22 member 2 (554 aa).

Residues 1-21 lie on the Cytoplasmic side of the membrane; it reads MPTVDDILEQVGHFHFFQKQT. A helical transmembrane segment spans residues 22–42; it reads FFLLALISAAFTPIYVGIVFL. Topologically, residues 43–149 are extracellular; sequence GFTPDHRCRS…LVCARSWMLD (107 aa). N71 is a glycosylation site (N-linked (GlcNAc...) asparagine). The chain crosses the membrane as a helical span at residues 150–170; that stretch reads LFQSAVNIGFFIGSVGIGYLA. Residues 171-176 are Cytoplasmic-facing; sequence DRFGRK. The chain crosses the membrane as a helical span at residues 177 to 197; it reads LCLLVTILINAAAGVLMAVSP. N198 carries an N-linked (GlcNAc...) asparagine glycan. Residues 198–209 are Extracellular-facing; the sequence is NYTWMLIFRLIQ. Residues 210–230 traverse the membrane as a helical segment; sequence GLVSKAGWLIGYILITEFVGL. Over 231–237 the chain is Cytoplasmic; the sequence is NYRRTVG. A helical membrane pass occupies residues 238–258; that stretch reads ILYQVAFTVGLLVLAGVAYAL. At 259-262 the chain is on the extracellular side; the sequence is PRWR. A helical transmembrane segment spans residues 263–283; that stretch reads WLQLTVTLPYFCFLLYYWCIP. The Proline-rich sequence motif lies at 283–287; sequence PESPR. Residues 284 to 348 lie on the Cytoplasmic side of the membrane; sequence ESPRWLISQN…RTPQIRKHTC (65 aa). Residues 349–369 form a helical membrane-spanning segment; that stretch reads ILMYNWFTSSVLYQGLIMHLG. The Extracellular segment spans residues 370-374; sequence LAGGD. The chain crosses the membrane as a helical span at residues 375 to 395; that stretch reads IYLDFFYSALVEFPAAFLIIA. Residues 396-403 are Cytoplasmic-facing; it reads TIDRVGRR. The chain crosses the membrane as a helical span at residues 404 to 424; that stretch reads YPWAVSNMVAGAACLASVFVP. Over 425-427 the chain is Extracellular; that stretch reads DDL. Residues 428 to 450 traverse the membrane as a helical segment; the sequence is QGLRITVACLGRMGITMAYEMVC. At 451-463 the chain is on the cytoplasmic side; the sequence is LVNAELYPTFIRN. Residues 464 to 484 form a helical membrane-spanning segment; that stretch reads LGVLVCSSLCDVGGIVTPFLV. At 485-493 the chain is on the extracellular side; that stretch reads YRLTAIWLQ. A helical membrane pass occupies residues 494–514; that stretch reads LPLVVFAVVGLVAGGLVLMLP. The Cytoplasmic segment spans residues 515 to 554; that stretch reads ETKGRTLPETIEEAENLQRPRKNREKVIYVHVRKADGPLT.

This sequence belongs to the major facilitator (TC 2.A.1) superfamily. Organic cation transporter (TC 2.A.1.19) family. Tyrosine phosphorylated. In terms of tissue distribution, expressed in kidney.

It is found in the basolateral cell membrane. Its subcellular location is the basal cell membrane. The catalysed reaction is (R)-noradrenaline(out) = (R)-noradrenaline(in). The enzyme catalyses (R)-adrenaline(out) = (R)-adrenaline(in). It catalyses the reaction serotonin(out) = serotonin(in). It carries out the reaction dopamine(out) = dopamine(in). The catalysed reaction is histamine(out) = histamine(in). The enzyme catalyses thiamine(in) = thiamine(out). It catalyses the reaction creatinine(in) = creatinine(out). It carries out the reaction 1-methylnicotinamide(out) = 1-methylnicotinamide(in). The catalysed reaction is guanidine(out) = guanidine(in). The enzyme catalyses choline(out) = choline(in). It catalyses the reaction agmatine(out) = agmatine(in). It carries out the reaction putrescine(out) = putrescine(in). The catalysed reaction is spermidine(in) = spermidine(out). The enzyme catalyses tyramine(in) = tyramine(out). It catalyses the reaction L-histidyl-L-proline diketopiperazine(in) = L-histidyl-L-proline diketopiperazine(out). It carries out the reaction (R)-salsolinol(in) = (R)-salsolinol(out). The catalysed reaction is N-methyl-(R)-salsolinol(in) = N-methyl-(R)-salsolinol(out). The enzyme catalyses acetylcholine(in) = acetylcholine(out). It catalyses the reaction prostaglandin F2alpha(out) = prostaglandin F2alpha(in). It carries out the reaction prostaglandin E2(out) = prostaglandin E2(in). With respect to regulation, tyrosine phosphorylation of the transporter leads to activation of the transport activity. Inhibited by cGMP, most likely through a cGMP-binding protein that interacts with OCT2. In terms of biological role, electrogenic voltage-dependent transporter that mediates the transport of a variety of organic cations such as endogenous bioactive amines, cationic drugs and xenobiotics. Functions as a Na(+)-independent, bidirectional uniporter. Cation cellular uptake or release is driven by the electrochemical potential, i.e. membrane potential and concentration gradient. However, may also engage electroneutral cation exchange when saturating concentrations of cation substrates are reached. Predominantly expressed at the basolateral membrane of hepatocytes and proximal tubules and involved in the uptake and disposition of cationic compounds by hepatic and renal clearance from the blood flow. Implicated in monoamine neurotransmitters uptake such as histamine, dopamine, adrenaline/epinephrine, noradrenaline/norepinephrine, serotonin and tyramine, thereby supporting a physiological role in the central nervous system by regulating interstitial concentrations of neurotransmitters. Also capable of transporting dopaminergic neuromodulators cyclo(his-pro), salsolinol and N-methyl-salsolinol, thereby involved in the maintenance of dopaminergic cell integrity in the central nervous system. Mediates the bidirectional transport of acetylcholine (ACh) at the apical membrane of ciliated cell in airway epithelium, thereby playing a role in luminal release of ACh from bronchial epithelium. Also transports guanidine and endogenous monoamines such as vitamin B1/thiamine, creatinine and N-1-methylnicotinamide (NMN). Mediates the uptake and efflux of quaternary ammonium compound choline. Mediates the bidirectional transport of polyamine agmatine and the uptake of polyamines putrescine and spermidine. Able to transport non-amine endogenous compounds such as prostaglandin E2 (PGE2) and prostaglandin F2-alpha (PGF2-alpha). Also involved in the uptake of xenobiotic 4-(4-(dimethylamino)styryl)-N-methylpyridinium (ASP). May contribute to regulate the transport of organic compounds in testis across the blood-testis-barrier. The sequence is that of Solute carrier family 22 member 2 (SLC22A2) from Oryctolagus cuniculus (Rabbit).